The primary structure comprises 289 residues: Pre-mRNA-splicing factor cwf23 (289 aa).

One can recognise a J domain in the interval 9-74 (DYYELLGINE…QLRKAYDSER (66 aa)). Basic and acidic residues predominate over residues 129–148 (ESANLRRQRENRLREEQEQS). Disordered stretches follow at residues 129–161 (ESANLRRQRENRLREEQEQSKRRKQETPSSKIS) and 269–289 (KQKHKQKQKENERKATSTMNA).

This sequence belongs to the DnaJ family. Belongs to the 40S cdc5-associated complex (or cwf complex), a spliceosome sub-complex reminiscent of a late-stage spliceosome composed of the U2, U5 and U6 snRNAs and at least brr2, cdc5, cwf2/prp3, cwf3/syf1, cwf4/syf3, cwf5/ecm2, spp42/cwf6, cwf7/spf27, cwf8, cwf9, cwf10, cwf11, cwf12, prp45/cwf13, cwf14, cwf15, cwf16, cwf17, cwf18, cwf19, cwf20, cwf21, cwf22, cwf23, cwf24, cwf25, cwf26, cyp7/cwf27, cwf28, cwf29/ist3, lea1, msl1, prp5/cwf1, prp10, prp12/sap130, prp17, prp22, sap61, sap62, sap114, sap145, slu7, smb1, smd1, smd3, smf1, smg1 and syf2.

Its subcellular location is the cytoplasm. The protein resides in the nucleus. In terms of biological role, involved in pre-mRNA splicing. May be involved in endoplasmic reticulum-associated protein degradation (ERAD) and required for growth at low and high temperatures. This Schizosaccharomyces pombe (strain 972 / ATCC 24843) (Fission yeast) protein is Pre-mRNA-splicing factor cwf23 (cwf23).